The sequence spans 114 residues: Vacuolar ATPase assembly integral membrane protein VMA21 (114 aa).

Residues 1 to 39 (MATRRIISQEKTLLEKDDSIGSSPAADEKSNIAPAVPTS) lie on the Cytoplasmic side of the membrane. A helical membrane pass occupies residues 40–60 (VIMKLLAFTLGMIVIPIGSYF). Residues 61–73 (ATVDSVFNGNSTY) lie on the Lumenal side of the membrane. The helical transmembrane segment at 74 to 94 (AGALAAIMANVVLIGYIFVAM) threads the bilayer. Residues 95-114 (AEDQSDQQEGGGPGDGKKDR) lie on the Cytoplasmic side of the membrane. The short motif at 111–114 (KKDR) is the Prevents secretion from ER element.

The protein belongs to the VMA21 family.

The protein localises to the endoplasmic reticulum membrane. It is found in the endoplasmic reticulum-Golgi intermediate compartment membrane. It localises to the cytoplasmic vesicle. The protein resides in the COPII-coated vesicle membrane. In terms of biological role, required for the assembly of the V0 complex of the vacuolar ATPase (V-ATPase) in the endoplasmic reticulum. This Chaetomium globosum (strain ATCC 6205 / CBS 148.51 / DSM 1962 / NBRC 6347 / NRRL 1970) (Soil fungus) protein is Vacuolar ATPase assembly integral membrane protein VMA21.